Reading from the N-terminus, the 644-residue chain is Threonine--tRNA ligase (644 aa).

Residues 8–70 (VKAMVITLRD…EEDGELEILT (63 aa)) form the TGS domain. The catalytic stretch occupies residues 251 to 541 (DHRKLGKELD…LTEHFAGAFP (291 aa)). Residues Cys342, His393, and His518 each contribute to the Zn(2+) site.

It belongs to the class-II aminoacyl-tRNA synthetase family. As to quaternary structure, homodimer. The cofactor is Zn(2+).

The protein resides in the cytoplasm. The catalysed reaction is tRNA(Thr) + L-threonine + ATP = L-threonyl-tRNA(Thr) + AMP + diphosphate + H(+). Catalyzes the attachment of threonine to tRNA(Thr) in a two-step reaction: L-threonine is first activated by ATP to form Thr-AMP and then transferred to the acceptor end of tRNA(Thr). Also edits incorrectly charged L-seryl-tRNA(Thr). This Caldanaerobacter subterraneus subsp. tengcongensis (strain DSM 15242 / JCM 11007 / NBRC 100824 / MB4) (Thermoanaerobacter tengcongensis) protein is Threonine--tRNA ligase.